A 2919-amino-acid chain; its full sequence is Cadherin EGF LAG seven-pass G-type receptor 2 (2919 aa).

The N-terminal stretch at 1-31 (MRSRAASAPLPTPLLPLLLLLLLLPPSPLLG) is a signal peptide. Over 32-2380 (DQVGPCRSLG…GEILPLKTLT (2349 aa)) the chain is Extracellular. The disordered stretch occupies residues 156–194 (LRAGEGSPEESLGGRRKRNVNTAPQFQPPSYQATVPENQ). Residues 175 to 194 (VNTAPQFQPPSYQATVPENQ) are compositionally biased toward polar residues. 9 consecutive Cadherin domains span residues 182–289 (QPPS…DPVF), 290–399 (EQQE…APQF), 400–505 (SEKR…APIF), 506–610 (VSTP…NPTF), 611–712 (TQPE…RPVF), 713–815 (QSSH…APQF), 816–921 (LRDS…PPVF), 922–1023 (EQDE…PPVL), and 1028–1146 (ILFN…SPLL). Residues Asn-486, Asn-557, and Asn-701 are each glycosylated (N-linked (GlcNAc...) asparagine). Residues Asn-1036, Asn-1076, Asn-1182, and Asn-1212 are each glycosylated (N-linked (GlcNAc...) asparagine). An EGF-like 1; atypical domain is found at 1228 to 1286 (DDNICLREPCENYMRCVSVLRFDSSAPFIASSSVLFRPIHPVGGLRCRCPPGFTGDYCE). The EGF-like 2; calcium-binding domain maps to 1288–1318 (EVDLCYSRPCGPHGRCRSREGGYTCLCLDGY). Disulfide bonds link Cys-1292-Cys-1303, Cys-1297-Cys-1312, Cys-1314-Cys-1323, Cys-1332-Cys-1343, Cys-1337-Cys-1353, and Cys-1355-Cys-1365. Positions 1328–1366 (HSGRCTPGVCKNGGTCVNLLVGGFKCDCPSGDFEKPFCQ) constitute an EGF-like 3; calcium-binding domain. One can recognise a Laminin G-like 1 domain in the interval 1367-1571 (VTTRSFPARS…IANNGTVPGC (205 aa)). N-linked (GlcNAc...) asparagine glycosylation is found at Asn-1501 and Asn-1565. 4 disulfides stabilise this stretch: Cys-1545-Cys-1571, Cys-1578-Cys-1589, Cys-1583-Cys-1598, and Cys-1600-Cys-1609. An EGF-like 4; calcium-binding domain is found at 1574-1610 (KKIVCDSSICHNGGTCVNQWNAFSCECPLGFGGKSCA). Asn-1591 is subject to (3R)-3-hydroxyasparagine. A Laminin G-like 2 domain is found at 1614–1791 (ANPQRFLGSS…GESINVEPGC (178 aa)). N-linked (GlcNAc...) asparagine glycosylation is present at Asn-1741. Residues 1787–1829 (VEPGCSWPDPCDSNPCPTNSYCSNDWDSYSCSCVLGYYGDNCT) form the EGF-like 5; calcium-binding domain. Disulfide bonds link Cys-1791–Cys-1802, Cys-1797–Cys-1817, Cys-1819–Cys-1828, Cys-1832–Cys-1843, Cys-1837–Cys-1855, Cys-1857–Cys-1866, Cys-1887–Cys-1899, Cys-1889–Cys-1906, Cys-1908–Cys-1921, Cys-1924–Cys-1936, Cys-1926–Cys-1943, Cys-1945–Cys-1954, and Cys-1957–Cys-1969. A glycan (N-linked (GlcNAc...) asparagine) is linked at Asn-1827. The 38-residue stretch at 1830-1867 (NVCDLNPCEHQSVCTRKPNTPHGYICECLPNYLGPYCE) folds into the EGF-like 6; calcium-binding domain. The region spanning 1883–1922 (TCGPCNCDVSKGFDPDCNKTSGECHCKENHYRPPGSPTCL) is the EGF-like 7; calcium-binding domain. Asn-1900 is a glycosylation site (N-linked (GlcNAc...) asparagine). The region spanning 1924–1971 (CDCYPTGSLSRVCDPEDGQCPCKPGVIGRQCDRCDNPFAEVTTNGCEV) is the Laminin EGF-like domain. N-linked (GlcNAc...) asparagine glycosylation is found at Asn-2024, Asn-2043, and Asn-2061. Residues 2199-2369 (ETTVILPESV…AVLMDMSRRE (171 aa)) enclose the GAIN-B domain. The segment at 2216 to 2241 (VRSAGPGEAQETEELARRQRRHPELS) is disordered. Cystine bridges form between Cys-2319–Cys-2351 and Cys-2339–Cys-2353. Positions 2319–2369 (CVFWNHSILVSGTGGWSARGCEVVFRNESHVSCQCNHMTSFAVLMDMSRRE) are GPS. 2 N-linked (GlcNAc...) asparagine glycosylation sites follow: Asn-2323 and Asn-2345. Residues 2381-2401 (YVALGVTLAALMLTFLFLTLL) form a helical membrane-spanning segment. The Cytoplasmic portion of the chain corresponds to 2402–2413 (RALRSNQHGIRR). A helical membrane pass occupies residues 2414 to 2433 (NLTAALGLAQLVFLLGINQA). At 2434-2438 (DLPFA) the chain is on the extracellular side. A helical transmembrane segment spans residues 2439–2459 (CTVIAILLHFLYLCTFSWALL). Residues 2460-2480 (EALHLYRALTEVRDVNASPMR) lie on the Cytoplasmic side of the membrane. A helical transmembrane segment spans residues 2481-2501 (FYYMLGWGVPAFITGLAVGLD). The Extracellular segment spans residues 2502–2518 (PEGYGNPDFCWLSVYDT). The helical transmembrane segment at 2519 to 2539 (LIWSFAGPVAFAVSMSVFLYI) threads the bilayer. Residues 2540–2563 (LSARASCAAQRQGFEKKGPVSGLR) are Cytoplasmic-facing. The chain crosses the membrane as a helical span at residues 2564–2584 (SSFTVLLLLSATWLLALLSVN). Over 2585-2591 (SDTLLFH) the chain is Extracellular. Residues 2592–2612 (YLFAACNCVQGPFIFLSYVVL) traverse the membrane as a helical segment. The Cytoplasmic segment spans residues 2613 to 2919 (SKEVRKALKF…SEFLFFNFLH (307 aa)). The tract at residues 2690 to 2884 (LNPGQVPPGL…PPRPPPRQSL (195 aa)) is disordered. Residues 2718–2730 (TDSDSDLSLEDDQ) show a composition bias toward acidic residues. Polar residues predominate over residues 2791–2800 (GTTTKENSGS). The span at 2803–2815 (LEERPRENGDALT) shows a compositional bias: basic and acidic residues. Residues 2857–2868 (GTGSSRGSSISE) are compositionally biased toward low complexity.

It belongs to the G-protein coupled receptor 2 family. LN-TM7 subfamily. In terms of assembly, heterodimer of 2 chains generated by proteolytic processing; the large extracellular N-terminal fragment and the membrane-bound C-terminal fragment predominantly remain associated and non-covalently linked. In terms of processing, the iron and 2-oxoglutarate dependent 3-hydroxylation of aspartate and asparagine is (R) stereospecific within EGF domains. Post-translationally, autoproteolytically processed at the GPS region of the GAIN-B domain; this cleavage modulates receptor activity. As to expression, expressed in the CNS and in the eye.

It is found in the cell membrane. In terms of biological role, receptor that may have an important role in cell/cell signaling during nervous system formation. This is Cadherin EGF LAG seven-pass G-type receptor 2 from Mus musculus (Mouse).